A 523-amino-acid polypeptide reads, in one-letter code: Transcription factor MYB120 (523 aa).

HTH myb-type domains lie at 23-75 (GVIL…ANHL) and 76-130 (RPNL…KRLL). 2 DNA-binding regions (H-T-H motif) span residues 51–75 (WNAVQKNTGLARCGKSCRLRWANHL) and 103–126 (WARMAAQLPGRTDNEIKNYWNTRL). 4 disordered regions span residues 140 to 254 (DIIP…YPTL), 332 to 373 (QTAT…SHYT), 396 to 426 (QIPQIDGFNNVNNFTDNERQNHNLNSSGAHR), and 444 to 470 (LASGGRGRPPKRRQLTASLPNHNNNTN). Residues 147–167 (LHPHPHHQQQQQHNHHHHHHQ) are compositionally biased toward basic residues. Over residues 175-185 (MYFQPQSSQRN) the composition is skewed to polar residues. Composition is skewed to low complexity over residues 202-212 (SSSSFTFHTTT), 223-232 (TPNTPSQLSS), and 341-368 (NPYSSSPSFSLNPSSSSYPTSTSSPSFL). Polar residues predominate over residues 396-410 (QIPQIDGFNNVNNFT).

Expressed in pollen grains and pollen tube. Mostly expressed in mature pollen grains, and, to a lower extent, in inflorescences and siliques.

Its subcellular location is the nucleus. Functionally, transcription activator. Binds to 5'-CAACTGTC-3' and/or 5'-TAACAAA-3' motif in target gene promoter to promote their expression. Together with MYB97 and MYB101, functions as a male factor that controls pollen tube-synergid interaction in fertilization. Required for pollen tube growth arrest and sperm cell release in the female gametophyte, probably via the regulation of pollen tube-specific gene expression. The sequence is that of Transcription factor MYB120 from Arabidopsis thaliana (Mouse-ear cress).